Consider the following 394-residue polypeptide: Probable purine permease 8 (394 aa).

10 helical membrane passes run 45–65, 77–97, 113–133, 139–159, 172–192, 208–228, 247–267, 289–309, 315–335, and 344–364; these read WLRI…STIL, TWMG…FRFF, FSSF…VSAN, VGLL…QLAF, FTPF…LLVV, VIGI…LSLV, LVAY…FASG, TLAS…GLIF, FSNS…VIVF, and IFSI…HYLD. Residues 373 to 394 are disordered; sequence TSPVGDPHLLPAEEGHTNIHSV. A compositionally biased stretch (basic and acidic residues) spans 383 to 394; the sequence is PAEEGHTNIHSV.

This sequence belongs to the purine permeases (TC 2.A.7.14) family.

Its subcellular location is the membrane. In Arabidopsis thaliana (Mouse-ear cress), this protein is Probable purine permease 8 (PUP8).